Reading from the N-terminus, the 283-residue chain is ATP synthase gamma chain (283 aa).

Belongs to the ATPase gamma chain family. As to quaternary structure, F-type ATPases have 2 components, CF(1) - the catalytic core - and CF(0) - the membrane proton channel. CF(1) has five subunits: alpha(3), beta(3), gamma(1), delta(1), epsilon(1). CF(0) has three main subunits: a, b and c.

The protein localises to the cell inner membrane. Its function is as follows. Produces ATP from ADP in the presence of a proton gradient across the membrane. The gamma chain is believed to be important in regulating ATPase activity and the flow of protons through the CF(0) complex. This chain is ATP synthase gamma chain, found in Ehrlichia ruminantium (strain Gardel).